The chain runs to 487 residues: Bifunctional protein GlmU (487 aa).

The segment at M1–R235 is pyrophosphorylase. Residues L13–G16, K27, Q82, G87–T88, S110–D112, G147, E162, N177, and N233 each bind UDP-N-acetyl-alpha-D-glucosamine. D112 contacts Mg(2+). Residue N233 participates in Mg(2+) binding. The tract at residues E236–S256 is linker. The segment at G257 to S487 is N-acetyltransferase. 2 residues coordinate UDP-N-acetyl-alpha-D-glucosamine: R339 and K357. H369 functions as the Proton acceptor in the catalytic mechanism. UDP-N-acetyl-alpha-D-glucosamine is bound by residues Y372 and N383. Acetyl-CoA contacts are provided by residues A386, N392–Y393, S411, A429, and R446. The tract at residues E453 to S487 is disordered. Residues A468 to P481 are compositionally biased toward low complexity.

In the N-terminal section; belongs to the N-acetylglucosamine-1-phosphate uridyltransferase family. The protein in the C-terminal section; belongs to the transferase hexapeptide repeat family. In terms of assembly, homotrimer. The cofactor is Mg(2+).

It is found in the cytoplasm. It catalyses the reaction alpha-D-glucosamine 1-phosphate + acetyl-CoA = N-acetyl-alpha-D-glucosamine 1-phosphate + CoA + H(+). It carries out the reaction N-acetyl-alpha-D-glucosamine 1-phosphate + UTP + H(+) = UDP-N-acetyl-alpha-D-glucosamine + diphosphate. It functions in the pathway nucleotide-sugar biosynthesis; UDP-N-acetyl-alpha-D-glucosamine biosynthesis; N-acetyl-alpha-D-glucosamine 1-phosphate from alpha-D-glucosamine 6-phosphate (route II): step 2/2. Its pathway is nucleotide-sugar biosynthesis; UDP-N-acetyl-alpha-D-glucosamine biosynthesis; UDP-N-acetyl-alpha-D-glucosamine from N-acetyl-alpha-D-glucosamine 1-phosphate: step 1/1. The protein operates within bacterial outer membrane biogenesis; LPS lipid A biosynthesis. Functionally, catalyzes the last two sequential reactions in the de novo biosynthetic pathway for UDP-N-acetylglucosamine (UDP-GlcNAc). The C-terminal domain catalyzes the transfer of acetyl group from acetyl coenzyme A to glucosamine-1-phosphate (GlcN-1-P) to produce N-acetylglucosamine-1-phosphate (GlcNAc-1-P), which is converted into UDP-GlcNAc by the transfer of uridine 5-monophosphate (from uridine 5-triphosphate), a reaction catalyzed by the N-terminal domain. This chain is Bifunctional protein GlmU, found in Anaeromyxobacter sp. (strain Fw109-5).